The primary structure comprises 805 residues: Phenylalanine--tRNA ligase beta subunit (805 aa).

One can recognise a tRNA-binding domain in the interval 39–148 (APPFTGVVVA…AALRPGTDIR (110 aa)). One can recognise a B5 domain in the interval 399-474 (PVREPVRMRL…RVYGFERIPD (76 aa)). Asp452, Asp458, Glu461, and Glu462 together coordinate Mg(2+). Residues 703–804 (SRQPAVVRDL…LVAAHNARQR (102 aa)) enclose the FDX-ACB domain.

Belongs to the phenylalanyl-tRNA synthetase beta subunit family. Type 1 subfamily. In terms of assembly, tetramer of two alpha and two beta subunits. Mg(2+) is required as a cofactor.

The protein localises to the cytoplasm. The catalysed reaction is tRNA(Phe) + L-phenylalanine + ATP = L-phenylalanyl-tRNA(Phe) + AMP + diphosphate + H(+). In Bordetella bronchiseptica (strain ATCC BAA-588 / NCTC 13252 / RB50) (Alcaligenes bronchisepticus), this protein is Phenylalanine--tRNA ligase beta subunit.